Reading from the N-terminus, the 129-residue chain is GEL complex subunit OPTI (129 aa).

At 1–44 (MSGGRRKEEPPQPQLANGALKVSVWSKVLRSDAAWEDKDEFLDV) the chain is on the cytoplasmic side. The helical transmembrane segment at 45 to 65 (IYWFRQIIAVVLGVIWGVLPL) threads the bilayer. Arginine 66 is a topological domain (lumenal). A helical transmembrane segment spans residues 67–84 (GFLGIAGFCVINAGVLYL). Over 85 to 103 (YFSNYLQIDEEEYGGTWEL) the chain is Cytoplasmic. The helical transmembrane segment at 104 to 127 (TKEGFMTSFALFMVIWIIFYTAIH) threads the bilayer. Topologically, residues 128–129 (YD) are lumenal.

Belongs to the EMC6 family. Component of the GET- and EMC-like (GEL) complex, composed of RAB5IF/OPTI and TMCO1. The GEL complex is part of the multi-pass translocon (MPT) complex, composed of three subcomplexes, the GEL complex (composed of RAB5IF/OPTI and TMCO1), the BOS complex (composed of NCLN/Nicalin, NOMO1 and TMEM147) and the PAT complex (composed of WDR83OS/Asterix and CCDC47). The MPT complex associates with the SEC61 complex. Interacts with NDUFS3, NDUFA4, NDUFV1, NDUFA9 and NDUFS8 of the mitochondrial membrane respiratory chain NADH dehydrogenase (Complex I). Interacts with UQCRC2 of the ubiquinol-cytochrome c reductase complex (Complex III). Interacts with COX5A and COX7C of the cytochrome c oxidase complex (Complex IV).

The protein localises to the endoplasmic reticulum membrane. Its subcellular location is the mitochondrion inner membrane. Functionally, component of the multi-pass translocon (MPT) complex that mediates insertion of multi-pass membrane proteins into the lipid bilayer of membranes. The MPT complex takes over after the SEC61 complex: following membrane insertion of the first few transmembrane segments of proteins by the SEC61 complex, the MPT complex occludes the lateral gate of the SEC61 complex to promote insertion of subsequent transmembrane regions. Within the MPT complex, the GEL subcomplex may mediate insertion of transmembrane regions into the membrane. In addition to its role in multi-pass membrane insertion, RAB5IF/OPTI also acts as an assembly factor for mitochondrial respiratory complexes. This chain is GEL complex subunit OPTI (RAB5IF), found in Canis lupus familiaris (Dog).